The primary structure comprises 95 residues: Aspartyl/glutamyl-tRNA(Asn/Gln) amidotransferase subunit C (95 aa).

Belongs to the GatC family. In terms of assembly, heterotrimer of A, B and C subunits.

The catalysed reaction is L-glutamyl-tRNA(Gln) + L-glutamine + ATP + H2O = L-glutaminyl-tRNA(Gln) + L-glutamate + ADP + phosphate + H(+). It carries out the reaction L-aspartyl-tRNA(Asn) + L-glutamine + ATP + H2O = L-asparaginyl-tRNA(Asn) + L-glutamate + ADP + phosphate + 2 H(+). Its function is as follows. Allows the formation of correctly charged Asn-tRNA(Asn) or Gln-tRNA(Gln) through the transamidation of misacylated Asp-tRNA(Asn) or Glu-tRNA(Gln) in organisms which lack either or both of asparaginyl-tRNA or glutaminyl-tRNA synthetases. The reaction takes place in the presence of glutamine and ATP through an activated phospho-Asp-tRNA(Asn) or phospho-Glu-tRNA(Gln). The sequence is that of Aspartyl/glutamyl-tRNA(Asn/Gln) amidotransferase subunit C from Chlorobaculum parvum (strain DSM 263 / NCIMB 8327) (Chlorobium vibrioforme subsp. thiosulfatophilum).